Reading from the N-terminus, the 1062-residue chain is Zinc finger protein swm (1062 aa).

One can recognise a PWI domain in the interval 7–75 (DKLKDWLSVV…ERLFDAIASE (69 aa)). Disordered stretches follow at residues 119-145 (ADSP…QASQ) and 171-340 (KPAF…PDRV). A compositionally biased stretch (polar residues) spans 134–145 (DSNQVKLEQASQ). The segment covering 172–182 (PAFDHKTKDSH) has biased composition (basic and acidic residues). Low complexity predominate over residues 197-207 (SASPPGRSSGV). Over residues 208 to 220 (SGSGGGGPGGAGL) the composition is skewed to gly residues. The span at 234-249 (SRRRRASLRSRSRSRS) shows a compositional bias: basic residues. Composition is skewed to basic and acidic residues over residues 264–273 (RRVNEREKTQ) and 294–310 (RNFD…DRPR). Positions 322–340 (RSMSPERNARRNQNSPDRV) are enriched in polar residues. A C3H1-type zinc finger spans residues 363–391 (SHPRQRCRDFDEKGYCVRGETCPWDHGVN). A disordered region spans residues 416–463 (EIWARSGGPPPGAGQGPVPPPTQPGQTTINPFSGNVRPTTLMSGSGPS). Pro residues predominate over residues 423–438 (GPPPGAGQGPVPPPTQ). A compositionally biased stretch (polar residues) spans 444–461 (INPFSGNVRPTTLMSGSG). An RRM domain is found at 561–635 (SSLELRKVPR…RFIKVFWHND (75 aa)). Disordered stretches follow at residues 666-704 (NVPA…QANT), 716-741 (TTTA…LNPA), 822-847 (QDQL…KEQQ), 886-920 (SAAN…PTRV), and 1004-1062 (APVE…SWRR). Over residues 721-733 (GSAGGAAGAGAPG) the composition is skewed to gly residues. The segment covering 823–840 (DQLQAQMQQQQQQQQPPV) has biased composition (low complexity). Polar residues predominate over residues 1018–1037 (SLENPKQLIQSVSESESLLG). The span at 1046 to 1056 (LEDEEEDEESE) shows a compositional bias: acidic residues.

Its subcellular location is the nucleus. In terms of biological role, negatively regulates Hedgehog (hh) protein signal in wing development. Regulates neural-specific glycosylation by binding to FucTA mRNA and facilitating its nuclear export in neural cells. The protein is Zinc finger protein swm of Drosophila melanogaster (Fruit fly).